The primary structure comprises 424 residues: Hydrolase ORFZ (424 aa).

The active-site Nucleophile is serine 243.

The protein belongs to the AB hydrolase superfamily. FUS2 hydrolase family. As to quaternary structure, homodimer.

Its pathway is secondary metabolite biosynthesis. In terms of biological role, hydrolyase; part of the gene cluster that mediates the biosynthesis of a tyrosine-derived cytochalasan acting as a fungal signal recognized by resistant rice plants and leads to avirulence in Pi33 resistant rice cultivars. The first step in the pathway is catalyzed by the hybrid PKS-NRPS ACE1, assisted by the enoyl reductase RAP1, that are responsible for fusion of the tyrosine precursor and the polyketide backbone. The polyketide synthase module (PKS) of ACE1 is responsible for the synthesis of the polyketide backbone and the downstream nonribosomal peptide synthetase (NRPS) amidates the carboxyl end of the polyketide with the tyrosine precursor. Because ACE1 lacks a designated enoylreductase (ER) domain, the required activity is provided the enoyl reductase RAP1. Reduction by the hydrolyase ORFZ, followed by dehydration and intra-molecular Diels-Alder cyclization by the Diels-Alderase ORF3 then yield the required isoindolone-fused macrocycle. A number of oxidative steps catalyzed by the tailoring enzymes identified within the cluster, including cytochrome P450 monooxygenases CYP1 to CYP4, the FAD-linked oxidoreductase OXR2 and the short-chain dehydrogenase/reductase OXR1, are further required to afford the final cytochalasans that confer avirulence and which have still to be identified. The monooxygenase CYP1 has been shown to be a site-selective C-18 hydroxylase whereas the function of CYP3 is the site-selective epoxidation of the C-6/C-7 olefin that is present in some intermediate compounds. Finally, SYN2 and RAP2 are not required for avirulence in Pi33 resistant rice cultivars. The sequence is that of Hydrolase ORFZ from Pyricularia oryzae (strain 70-15 / ATCC MYA-4617 / FGSC 8958) (Rice blast fungus).